Consider the following 476-residue polypeptide: Flavin-dependent halogenase otaD (476 aa).

Residues Gly14 and Gly17 each coordinate FAD. Chloride contacts are provided by Ser304 and Gly305. Val306 lines the FAD pocket.

The protein belongs to the flavin-dependent halogenase family.

The catalysed reaction is ochratoxin B + FADH2 + chloride + O2 = ochratoxin A + FAD + 2 H2O. It participates in mycotoxin biosynthesis. Its function is as follows. Flavin-dependent halogenase; part of the gene cluster that mediates the biosynthesis of ochratoxin A (OTA), a mycotoxin composed of a chlorinated type I polyketide dihydroisocoumarin moiety linked to L-phenylalanine, and demonstrated to have nephrotoxic, immunotoxic, genotoxic, neurotoxic, and teratogenic properties. OtaD chlorinates ochratoxin B (OTB) at the C-5 position to form OTA. The pathway begins with the highly reducing polyketide synthase otaA that catalyzes the formation of the isocoumarin group during the initial stages of biosynthesis, starting from one acetate and 4 malonate units, to originate the characteristic pentaketide skeleton 7-methylmellein (7-MM) of the OTA molecule. The newly identified cyclase otaY might be involved in the polyketide cyclization reaction during the initial steps of the OTA biosynthesis. 7-MM is then oxidized into 7-carboxymellein (also called ochratoxin beta) by the cytochrome P450 monooxygenase otaC. The NRPS encoded by the otaB gene is involved in the linking of phenylalanine to the dihydroisocoumarin ring. The reaction catalyzed by NRPS results in the production of ochratoxin B (OTB), which is the non-chlorinated analog of OTA and which subsequently serves as the substrate of the halogenase otaD for chlorination activity to form the final molecular structure of OTA, containing a chlorine atom in the C-5 position of the molecule. The chain is Flavin-dependent halogenase otaD from Aspergillus niger (strain ATCC MYA-4892 / CBS 513.88 / FGSC A1513).